The chain runs to 156 residues: Small ribosomal subunit protein uS7c (156 aa).

The protein belongs to the universal ribosomal protein uS7 family. As to quaternary structure, part of the 30S ribosomal subunit.

Its subcellular location is the plastid. The protein resides in the chloroplast. Its function is as follows. One of the primary rRNA binding proteins, it binds directly to 16S rRNA where it nucleates assembly of the head domain of the 30S subunit. This is Small ribosomal subunit protein uS7c (rps7) from Nephroselmis olivacea (Green alga).